The chain runs to 393 residues: Ribonuclease D (393 aa).

Residues 14–181 (LITTTEDLTG…VYQLLLERLE (168 aa)) enclose the 3'-5' exonuclease domain. In terms of domain architecture, HRDC spans 219–300 (NRRMLGVLRA…AAARALPDGA (82 aa)).

The protein belongs to the RNase D family. A divalent metal cation serves as cofactor.

The protein localises to the cytoplasm. The enzyme catalyses Exonucleolytic cleavage that removes extra residues from the 3'-terminus of tRNA to produce 5'-mononucleotides.. In terms of biological role, exonuclease involved in the 3' processing of various precursor tRNAs. Initiates hydrolysis at the 3'-terminus of an RNA molecule and releases 5'-mononucleotides. In Gluconacetobacter diazotrophicus (strain ATCC 49037 / DSM 5601 / CCUG 37298 / CIP 103539 / LMG 7603 / PAl5), this protein is Ribonuclease D.